A 442-amino-acid polypeptide reads, in one-letter code: Cation channel sperm-associated protein 4 (442 aa).

Topologically, residues 1-66 are cytoplasmic; sequence MSEKHKWWQQ…TQMYIKQLLR (66 aa). A helical membrane pass occupies residues 67–88; that stretch reads HPAFQLLLAFLLLSNAITIALR. The Extracellular portion of the chain corresponds to 89 to 98; that stretch reads TNSYLGQKHY. The helical transmembrane segment at 99 to 125 threads the bilayer; that stretch reads ELFSTIDDIVLTILICEVLLGWLNGFW. Over 126–129 the chain is Cytoplasmic; it reads IFWK. Residues 130 to 153 traverse the membrane as a helical segment; it reads DGWNILNFAIVFILFMGFFIKQLD. Topologically, residues 154-156 are extracellular; the sequence is MVA. Residues 157-175 form a helical membrane-spanning segment; that stretch reads ITYPLRVLRLVHVCMAVEP. Over 176–188 the chain is Cytoplasmic; the sequence is LARIIKVILQSMP. Residues 189-212 traverse the membrane as a helical segment; the sequence is DLANVMALILFFMLVFSVFGVTLF. Residues 213 to 222 are Extracellular-facing; the sequence is GAFVPKHFQN. The helical; Pore-forming intramembrane region spans 223–234; the sequence is MGVALYTLFICI. Topologically, residues 235-255 are extracellular; it reads TQDGWLDIYTDFQMDEREYAM. Residues 256–283 traverse the membrane as a helical segment; the sequence is EVGGAIYFAVFITLGAFIGLNLFVVVVT. Topologically, residues 284–442 are cytoplasmic; it reads TNLEQMMKTG…NMVNKHKFSH (159 aa).

This sequence belongs to the cation channel sperm-associated (TC 1.A.1.19) family. As to quaternary structure, component of the CatSper complex or CatSpermasome composed of the core pore-forming members CATSPER1, CATSPER2, CATSPER3 and CATSPER4 as well as auxiliary members CATSPERB, CATSPERG2, CATSPERD, CATSPERE, CATSPERZ, C2CD6/CATSPERT, SLCO6C1, TMEM249, TMEM262 and EFCAB9. HSPA1 may be an additional auxiliary complex member. The core complex members CATSPER1, CATSPER2, CATSPER3 and CATSPER4 form a heterotetrameric channel. The auxiliary CATSPERB, CATSPERG2, CATSPERD and CATSPERE subunits form a pavilion-like structure over the pore which stabilizes the complex through interactions with CATSPER4, CATSPER3, CATSPER1 and CATSPER2 respectively. SLCO6C1 interacts with CATSPERE and TMEM262/CATSPERH interacts with CATSPERB, further stabilizing the complex. C2CD6/CATSPERT interacts at least with CATSPERD and is required for targeting the CatSper complex in the flagellar membrane. In terms of tissue distribution, testis-specific.

The protein localises to the cell projection. Its subcellular location is the cilium. It is found in the flagellum membrane. It catalyses the reaction Ca(2+)(in) = Ca(2+)(out). With respect to regulation, in contrast to the human ortholog, not activated by progesterone. Activated by intracellular alkalinization. In terms of biological role, pore-forming subunit of the CatSper complex, a sperm-specific voltage-gated calcium channel that plays a central role in sperm cell hyperactivation. Controls calcium entry to mediate the hyperactivated motility, a step needed for sperm motility which is essential late in the preparation of sperm for fertilization. This Mus musculus (Mouse) protein is Cation channel sperm-associated protein 4 (Catsper4).